The primary structure comprises 778 residues: Dapper homolog 1 (778 aa).

Composition is skewed to basic and acidic residues over residues 1–10 (MKPDAAREPE) and 18–40 (AEAE…TRER). A disordered region spans residues 1–40 (MKPDAAREPEPLSPGRGAEAEGRWRERGEADTERQRTRER). Residues 85–149 (DAAQRSRLEE…SEEHLETDSR (65 aa)) are required for self-association. Residues 85 to 149 (DAAQRSRLEE…SEEHLETDSR (65 aa)) are a coiled coil. The Nuclear export signal signature appears at 125-134 (LDKQISDLRL). Disordered regions lie at residues 305–324 (KTHP…DPTK), 359–386 (GGIT…QLES), 397–416 (AGAA…KAAS), 428–468 (ESMK…SQKN), 544–616 (EKPR…HKRT), and 694–721 (NCFG…SEES). Positions 375 to 386 (RSKDSKTDQLES) are enriched in basic and acidic residues. Polar residues predominate over residues 432–443 (ESNQASAVSPKT). The Bipartite nuclear localization signal motif lies at 551 to 564 (KKCRFPDDSDTNKK). The span at 554-563 (RFPDDSDTNK) shows a compositional bias: basic and acidic residues. The segment covering 564–574 (KFRKTSAKGRR) has biased composition (basic residues). Residues 694-704 (NCFGDSESSVS) show a composition bias toward polar residues. Positions 768 to 778 (RSGSLKLMTTV) match the PDZ-binding motif. At Ser-769 the chain carries Phosphoserine; by PKA.

This sequence belongs to the dapper family. In terms of assembly, can form homodimers and heterodimers with DACT2 or DACT3. Interacts with CSNK1D, PKA catalytic subunit, PKC-type kinase, CSNK2A1, CSNK2B, DVL1, DLV2, DVAL3, VANGL1, VANGL2, CTNND1 and HDAC1. Interacts with GSK3B; the interaction is indicative for an association of DACT1 with the beta-catenin destruction complex. Interacts with GSK3A. Interacts with YWHAB; the interaction is enhanced by PKA phosphorylating DACT1 at Ser-769. Interacts with CTNNB1. Expressed in multiple tissues including brain, heart, kidney, liver and testis.

The protein resides in the cytoplasm. It is found in the nucleus. It localises to the synapse. Its function is as follows. Involved in regulation of intracellular signaling pathways during development. Specifically thought to play a role in canonical and/or non-canonical Wnt signaling pathways through interaction with DSH (Dishevelled) family proteins. The activation/inhibition of Wnt signaling may depend on the phosphorylation status. Proposed to regulate the degradation of CTNNB1/beta-catenin, thereby modulating the transcriptional activation of target genes of the Wnt signaling pathway. Its function in stabilizing CTNNB1 may involve inhibition of GSK3B activity. Promotes the membrane localization of CTNNB1. The cytoplasmic form can induce DVL2 degradation via a lysosome-dependent mechanism; the function is inhibited by PKA-induced binding to 14-3-3 proteins, such as YWHAB. Seems to be involved in morphogenesis at the primitive streak by regulating VANGL2 and DVL2; the function seems to be independent of canonical Wnt signaling and rather involves the non-canonical Wnt/planar cell polarity (PCP) pathway. The nuclear form may prevent the formation of LEF1:CTNNB1 complex and recruit HDAC1 to LEF1 at target gene promoters to repress transcription thus antagonizing Wnt signaling. May be involved in positive regulation of fat cell differentiation. During neuronal differentiation may be involved in excitatory synapse organization, and dendrite formation and establishment of spines. The sequence is that of Dapper homolog 1 (Dact1) from Mus musculus (Mouse).